We begin with the raw amino-acid sequence, 492 residues long: Tyrosine--tRNA ligase, mitochondrial (492 aa).

L-tyrosine is bound at residue Y89. Residue D93 participates in ATP binding. The 'HIGH' region motif lies at 94–103 (PTAQSLHLGN). L-tyrosine is bound by residues D133, Y239, Q243, D246, and Q265. Positions 303–307 (KFGKS) match the 'KMSKS' region motif. K306 is an ATP binding site.

The protein belongs to the class-I aminoacyl-tRNA synthetase family. In terms of assembly, homodimer.

The protein resides in the mitochondrion matrix. It catalyses the reaction tRNA(Tyr) + L-tyrosine + ATP = L-tyrosyl-tRNA(Tyr) + AMP + diphosphate + H(+). Its function is as follows. Catalyzes the attachment of tyrosine to tRNA(Tyr) in a two-step reaction: tyrosine is first activated by ATP to form Tyr-AMP and then transferred to the acceptor end of tRNA(Tyr). This is Tyrosine--tRNA ligase, mitochondrial (MSY1) from Saccharomyces cerevisiae (strain ATCC 204508 / S288c) (Baker's yeast).